The primary structure comprises 431 residues: Anaerobic glycerol-3-phosphate dehydrogenase subunit B (431 aa).

The protein belongs to the anaerobic G-3-P dehydrogenase subunit B family. Composed of a catalytic GlpA/B dimer and of membrane bound GlpC. It depends on FMN as a cofactor.

It carries out the reaction a quinone + sn-glycerol 3-phosphate = dihydroxyacetone phosphate + a quinol. It functions in the pathway polyol metabolism; glycerol degradation via glycerol kinase pathway; glycerone phosphate from sn-glycerol 3-phosphate (anaerobic route): step 1/1. In terms of biological role, conversion of glycerol 3-phosphate to dihydroxyacetone. Uses fumarate or nitrate as electron acceptor. The sequence is that of Anaerobic glycerol-3-phosphate dehydrogenase subunit B from Mannheimia succiniciproducens (strain KCTC 0769BP / MBEL55E).